Consider the following 289-residue polypeptide: Poly-beta-1,6-N-acetyl-D-glucosamine N-deacetylase (289 aa).

A signal peptide spans 1 to 30 (MKPFKLIFISALMILIMTNATPISHLNAQA). The NodB homology domain maps to 113-289 (RSVWINFDDM…KEWDGFDEEK (177 aa)).

This sequence belongs to the polysaccharide deacetylase family.

The protein resides in the secreted. The protein localises to the cell wall. In terms of biological role, catalyzes the N-deacetylation of poly-beta-1,6-N-acetyl-D-glucosamine (PNAG, also referred to as PIA), a biofilm adhesin polysaccharide. In fact, the IcaB deacetylase converts 15 to 20% of the GlcNAc residues of PNAG to glucosamine. N-deacetylation is crucial for attachment of the polysaccharide to the bacterial cell surface; it leads to the introduction of positive charges in the otherwise neutral PIA polymer, allowing electrostatic interactions. Deacetylation of the polymer is also essential for key virulence mechanisms of S.epidermidis, namely biofilm formation, colonization, and resistance to neutrophil phagocytosis and human antibacterial peptides. The polypeptide is Poly-beta-1,6-N-acetyl-D-glucosamine N-deacetylase (icaB) (Staphylococcus epidermidis (strain ATCC 35984 / DSM 28319 / BCRC 17069 / CCUG 31568 / BM 3577 / RP62A)).